The primary structure comprises 249 residues: MASSFDNQMDQDGMCSVYSAQPSETNCSINEVLAKEIIAVNETPDDQADSSIYPIPKSETNVSASEGFQPCQDINQFNLSVYSAPKSETPVTMNEKFERCKDLMNVLDYSVYSMPPSEANVTMNVASFSEYTALASETNVTMADVLKNVAQDLASEHTAKSAHPTFDTTAYVERLQAELGIPDSKVIGLECSNFSNAKIIDSIECLHQLDKFQPIPVDFDQNPDFGKTAKSVESYLLRSSNASSIHHEI.

This is an uncharacterized protein from Caenorhabditis elegans.